We begin with the raw amino-acid sequence, 480 residues long: Alpha-glucosidase (480 aa).

4–70 (VKIGIIGAGS…ADLKFEKTTS (67 aa)) serves as a coordination point for NAD(+). Residues Asp119 and Asn153 each contribute to the substrate site. Cys174 serves as a coordination point for Mn(2+). His175 acts as the Proton donor in catalysis. Position 203 (His203) interacts with Mn(2+). The active-site Proton acceptor is the Asp260.

It belongs to the glycosyl hydrolase 4 family. In terms of assembly, homodimer. The cofactor is NAD(+). Requires Mn(2+) as cofactor.

It catalyses the reaction Hydrolysis of terminal, non-reducing (1-&gt;4)-linked alpha-D-glucose residues with release of alpha-D-glucose.. Its activity is regulated as follows. Inhibited by EDTA in vitro. Functionally, is able to hydrolyze diverse types of alpha-glycoside bonds in di- and trisaccharides: alpha-1,4 bonds of maltose and maltotriose, alpha-1,1 bonds of trehalose, alpha-1,2 bonds of sucrose, alpha-1,3 bonds of turanose and melizitose, alpha-1,6 bonds of isomaltose and melibiose. AglA is not specific with respect to the configuration at the C-4 position of its substrates because it also possesses alpha-galactosidase activity. Acts on the substrate from the non-reducing end of the chain. The activity of AglA drops with increasing length of the saccharide chain. Does not hydrolyze alpha-, beta-, and gamma-cyclodextrins or polysaccharides (starch, pullulan, amylose, amylopectin, glycogen). Does not cleave beta-glycosidic bonds in di-, oligo-, or polysaccharides. This chain is Alpha-glucosidase (aglA), found in Thermotoga neapolitana.